We begin with the raw amino-acid sequence, 346 residues long: Farnesyl diphosphate synthase 1 (346 aa).

Isopentenyl diphosphate is bound by residues Lys52, Arg55, and Gln90. Asp97 and Asp101 together coordinate Mg(2+). Residues 97 to 101 carry the DDXXD motif motif; sequence DDIMD. Arg106 is a binding site for dimethylallyl diphosphate. Arg107 contacts isopentenyl diphosphate. Residues Lys194, Thr195, and Gln233 each contribute to the dimethylallyl diphosphate site. The DDXXD motif motif lies at 236-240; it reads DDYLD. Dimethylallyl diphosphate is bound by residues Lys250 and Lys259.

It belongs to the FPP/GGPP synthase family. Requires Mg(2+) as cofactor. Mn(2+) serves as cofactor. Highly expressed in shoots.

It catalyses the reaction isopentenyl diphosphate + (2E)-geranyl diphosphate = (2E,6E)-farnesyl diphosphate + diphosphate. The enzyme catalyses isopentenyl diphosphate + dimethylallyl diphosphate = (2E)-geranyl diphosphate + diphosphate. The protein operates within isoprenoid biosynthesis; farnesyl diphosphate biosynthesis; farnesyl diphosphate from geranyl diphosphate and isopentenyl diphosphate: step 1/1. Its pathway is isoprenoid biosynthesis; geranyl diphosphate biosynthesis; geranyl diphosphate from dimethylallyl diphosphate and isopentenyl diphosphate: step 1/1. Catalyzes the sequential condensation of isopentenyl pyrophosphate (IPP) with the allylic pyrophosphates, dimethylallyl pyrophosphate (DMAPP), and then with the resultant geranylpyrophosphate (GPP) to the ultimate product farnesyl pyrophosphate (FPP). Has a 4.5 time greater affinity for GPP versus DMAPP. This is Farnesyl diphosphate synthase 1 (FDS-1) from Artemisia spiciformis (Spiked big sagebrush).